The chain runs to 291 residues: Undecaprenyl-diphosphatase (291 aa).

8 helical membrane passes run 1–21 (MFIIELIKGIILGVVEGLTEF), 48–68 (SAFTFKIVIQLGSVFAAAWVF), 102–122 (LHVLVGMVPAGILGLLFDDFI), 126–146 (LFSVPTVMIGLFVGAIYMIIA), 162–182 (INYFQAFVIGISQAVAMWPGF), 203–223 (SDFTFIMAVPIMLAASGLSLL), 236–256 (FYILGFLAAFTVGLIAIKTFL), and 267–287 (FAIYRIVLVIFIAILYFGFGI).

Belongs to the UppP family.

It localises to the cell membrane. It catalyses the reaction di-trans,octa-cis-undecaprenyl diphosphate + H2O = di-trans,octa-cis-undecaprenyl phosphate + phosphate + H(+). Catalyzes the dephosphorylation of undecaprenyl diphosphate (UPP). Confers resistance to bacitracin. In Staphylococcus aureus (strain MSSA476), this protein is Undecaprenyl-diphosphatase.